The chain runs to 321 residues: Probable pectate lyase A (321 aa).

The signal sequence occupies residues 1–18 (MKFVATLIACGLSGLALA). Asn93 carries an N-linked (GlcNAc...) asparagine glycan. Ca(2+) contacts are provided by Asp134, Asp163, and Asp167. Arg220 is a catalytic residue. Asn238 is a glycosylation site (N-linked (GlcNAc...) asparagine).

This sequence belongs to the polysaccharide lyase 1 family. Ca(2+) serves as cofactor.

The protein localises to the secreted. The enzyme catalyses Eliminative cleavage of (1-&gt;4)-alpha-D-galacturonan to give oligosaccharides with 4-deoxy-alpha-D-galact-4-enuronosyl groups at their non-reducing ends.. Pectinolytic enzyme consist of four classes of enzymes: pectin lyase, polygalacturonase, pectin methylesterase and rhamnogalacturonase. Among pectinolytic enzymes, pectin lyase is the most important in depolymerization of pectin, since it cleaves internal glycosidic bonds of highly methylated pectins. Favors pectate, the anion, over pectin, the methyl ester. In Neosartorya fischeri (strain ATCC 1020 / DSM 3700 / CBS 544.65 / FGSC A1164 / JCM 1740 / NRRL 181 / WB 181) (Aspergillus fischerianus), this protein is Probable pectate lyase A (plyA).